The chain runs to 291 residues: m-AAA protease-interacting protein 1, mitochondrial (291 aa).

The transit peptide at Met-1 to Tyr-96 directs the protein to the mitochondrion.

Interacts with AFG3L2. Interacts with SPG7. Interacts with SMDT1/EMRE (via the N-terminal transit peptide); interaction is direct and takes place before maturation of SMDT1/EMRE.

It is found in the mitochondrion matrix. Promotes sorting of SMDT1/EMRE in mitochondria by ensuring its maturation. Interacts with the transit peptide region of SMDT1/EMRE precursor protein in the mitochondrial matrix, leading to protect it against protein degradation by YME1L1, thereby ensuring SMDT1/EMRE maturation by the mitochondrial processing peptidase (PMPCA and PMPCB). The polypeptide is m-AAA protease-interacting protein 1, mitochondrial (Bos taurus (Bovine)).